The chain runs to 343 residues: Insertion element IS630 uncharacterized 39 kDa protein (343 aa).

The protein is Insertion element IS630 uncharacterized 39 kDa protein of Shigella sonnei.